Consider the following 365-residue polypeptide: Histidinol-phosphate aminotransferase (365 aa).

Lys223 carries the N6-(pyridoxal phosphate)lysine modification.

Belongs to the class-II pyridoxal-phosphate-dependent aminotransferase family. Histidinol-phosphate aminotransferase subfamily. In terms of assembly, homodimer. The cofactor is pyridoxal 5'-phosphate.

It catalyses the reaction L-histidinol phosphate + 2-oxoglutarate = 3-(imidazol-4-yl)-2-oxopropyl phosphate + L-glutamate. It participates in amino-acid biosynthesis; L-histidine biosynthesis; L-histidine from 5-phospho-alpha-D-ribose 1-diphosphate: step 7/9. The sequence is that of Histidinol-phosphate aminotransferase from Brucella abortus (strain 2308).